Here is a 1428-residue protein sequence, read N- to C-terminus: MDISKKEKLKLLLEQIRMPDNEIEAHFSNSYLDKVEVHKADKKWHFYINIDHVLPFQTYQLFHHSLKESFASIAEVSLTLSAENRHCPEGDIQIYWKHFIAQTSLSPAYRDLVLDQAPEVSNNKIMLTARNEAEASALKKRLEAKFHDFCLSIGSLPYTLEVEVKTNTEAMQEFRDKKALEDQQLVMKTVQEKEKRDKDKSVPDQQPLAIGYKIQDEPITMDQIIDEERRITVQGYVFDAEVRELRSGRSLLIIKATDYTDSIQIKMFSKGDEDAAKFASVKKGMWVKARGSIQTDMYTNELAMMAKDIHEIHVSQRMDDASEDKKRVELHTHTTMSQMDAVVSPEALVEQAAKWGHKAIAITDHAGVQGFPDAHNAGKKHGVKVLYGVEANLVDDGVPIAYNEADRNLYEDTFVVFDVETTGLSAVYDTIIELAAVKIKGGEIVDRFESFANPHHALSQTTIDLTGITDDMVNDAPEVADVLKDFHTWMGNDILVAHNASFDMGFLNQGFQRIDYEKASNPVVDTLELARFLLPELRNHRLNTLCKHLDIELTQHHRAIYDAEATGYLLWKLVQRLVEKEISNHLELNNHMGENNAYQRSRPYHCTLIAQTEEGLKNLYKLVSRAHIDFFYRVPRLPRSVLQKHREGILVGTACDKGEVFETMMQKSEEEAEQVADFYDYIEVQPPENYTHLIEKDLVQNESQILDILRKLVNLGDKMKKTVVATGNVHYLHEHDKQYRQILIGSQAGNPLSRHKLPDTPFRTTTEMINCFHFLGEKKANEIVVDNTQKLTDSIEEISPVKDGLFTPNIEGAEQEMRDLCYNKAKEVYGEPVPQIVVDRLEKELESIIGNGFAVIYLISQKLVKKSLDDGYLVGSRGSVGSSFVATMTEITEVNPLVPHYVCKHCHHHEFFTDGSVASGFDLPDKDCPGCGKGLTKDGQDIPFETFLGFKGDKVPDIDLNFSGDYQPRAHNYTKELFGIDNVYRAGTIGTVAEKTAYGYVKGYASDNQFVYKNAEVDRLVQGCTGVKRTTGQHPGGIIVVPSDKEIYDFTPIQFPADDRNSEWRTTHFDFHSIHDNLLKLDILGHDDPTVIRMLQDLSGMDPKNIPTDDEEVMKIFSGTESLGVTPEQINCKTGTLGVPEFGTKFVRQMLEDTKPKTFAELLIISGLSHGTDVWLGNAQELINDGICQLPDVIGCRDDIMVYLMHKGLDPSMAFTIMEFVRKGKGLKDEWIDEMKKHAVPDWYIESCKKIKYMFPKAHAAAYVLMAVRIAYFKVHHPILFYAAYFTVRADDFELDTMIKGSDAIRKRIEEITVKGNDASPKEKNLLTVLEISLEMCERGFSFKKVDLYQSSATDFIVEGDSLLPPFNAVDGLGTNAALNIVKAREEGEFLSKEDLRERSKISKTVLEYLDNHGCLEGMEDKNQLSLF.

Residues 414 to 570 (FVVFDVETTG…YDAEATGYLL (157 aa)) form the Exonuclease domain.

This sequence belongs to the DNA polymerase type-C family. PolC subfamily.

The protein resides in the cytoplasm. The catalysed reaction is DNA(n) + a 2'-deoxyribonucleoside 5'-triphosphate = DNA(n+1) + diphosphate. Required for replicative DNA synthesis. This DNA polymerase also exhibits 3' to 5' exonuclease activity. This chain is DNA polymerase III PolC-type, found in Oceanobacillus iheyensis (strain DSM 14371 / CIP 107618 / JCM 11309 / KCTC 3954 / HTE831).